Reading from the N-terminus, the 544-residue chain is MTPTELKRLYRIIKVQLEYGLDDLLPDHQLAKAPRWMRKSLFWLKNQHPEKPLGDRLRLALQELGPVWIKFGQMLSTRRDLFPPHIADPLALLQDQVSPFDGALAKAQMEQALGGPLETWFSDFDLVPLASASIAQVHTAKLKTTNQEVVLKVIRPDIRPIIDADLKLMRRMARIVAKAMPEARRLKPIEVVREYEKTLLDELDLRREAANAIQLRRNFTDSEELYVPEVYPDFSNETVMVSERIYGIQVSDIAGLKANGTNMKLLAERGVSVFFTQVFRDSFFHADMHPGNVFVNPEHPENPQWIGLDCGIVGTLNSEDKRYLAENFLAFFNRDYRRVAELHVDSGWVPADTNIDEFEFAIRIVCEPIFAKPLCEISFGHVLLNLFNTARRFNMEVQPQLVLLQKTLLYVEGLGRQLYPQLDLWETAKPFLEEWMMNQVGPKALINAIKDRAPYWAEKLPELPELLYDSLKQGKAMNQRMDQLYQGYRASKRQQATGKFLFGVGATLVVCSAILVDHTYEQLSLATAIAGVTFWLFSWRAYRR.

The region spanning 123-501 is the Protein kinase domain; sequence DFDLVPLASA…KRQQATGKFL (379 aa). Residues 129–137 and Lys-152 each bind ATP; that span reads LASASIAQV. Asp-287 acts as the Proton acceptor in catalysis. A run of 2 helical transmembrane segments spans residues 496-516 and 519-539; these read ATGK…AILV and TYEQ…LFSW.

Belongs to the ABC1 family. UbiB subfamily.

It localises to the cell inner membrane. It participates in cofactor biosynthesis; ubiquinone biosynthesis [regulation]. Functionally, is probably a protein kinase regulator of UbiI activity which is involved in aerobic coenzyme Q (ubiquinone) biosynthesis. The protein is Probable protein kinase UbiB of Vibrio vulnificus (strain CMCP6).